Reading from the N-terminus, the 147-residue chain is MALKRIHKELNDLAQDPPAQCSAGPVGEDMFHWQATIMGPNDSPYQGGAFFLTIDFPTEYPFKPPKVEFTTRIYHPNVNSNGSICLDILRSQWSPALTISKVLLSISSLLCDPNPDDPLVPEIAQIYKTDRDKYNRTAREWTQKYAM.

Positions 1 to 147 (MALKRIHKEL…AREWTQKYAM (147 aa)) constitute a UBC core domain. Catalysis depends on cysteine 85, which acts as the Glycyl thioester intermediate.

The protein belongs to the ubiquitin-conjugating enzyme family. In terms of assembly, interacts with CNOT4 (via RING domain). Testis-specific. Mainly expressed in the round spermatids (at protein level).

It carries out the reaction S-ubiquitinyl-[E1 ubiquitin-activating enzyme]-L-cysteine + [E2 ubiquitin-conjugating enzyme]-L-cysteine = [E1 ubiquitin-activating enzyme]-L-cysteine + S-ubiquitinyl-[E2 ubiquitin-conjugating enzyme]-L-cysteine.. Its pathway is protein modification; protein ubiquitination. Catalyzes the covalent attachment of ubiquitin to other proteins. Mediates the selective degradation of short-lived and abnormal proteins. Functions in the E6/E6-AP-induced ubiquitination of p53/TP53. Mediates ubiquitination of PEX5 and SQSTM1 and autoubiquitination of STUB1 and TRAF6. Involved in the signal-induced conjugation and subsequent degradation of NFKBIA, FBXW2-mediated GCM1 ubiquitination and degradation, MDM2-dependent degradation of p53/TP53 and the activation of MAVS in the mitochondria by RIGI in response to viral infection Plays a role in early maturation of the testis. The sequence is that of Ubiquitin-conjugating enzyme E2 D2B (Ube2d2b) from Rattus norvegicus (Rat).